A 333-amino-acid chain; its full sequence is HTH-type transcriptional repressor PurR (333 aa).

An HTH lacI-type domain is found at 2 to 56; the sequence is ATIKDVAKMAGVSTTTVSHVINKTRFVAKETEQQVLQAIKNLNYSPSAVARSLKV. Positions 4-23 form a DNA-binding region, H-T-H motif; the sequence is IKDVAKMAGVSTTTVSHVIN. A DNA-binding region spans residues 48–56; that stretch reads SAVARSLKV. 5 residues coordinate hypoxanthine: Tyr73, Lys189, Thr191, Phe220, and Asp274.

In terms of assembly, homodimer.

It participates in purine metabolism; purine nucleotide biosynthesis [regulation]. Functionally, is the main repressor of the genes involved in the de novo synthesis of purine nucleotides, regulating purB, purC, purEK, purF, purHD, purL, purMN and guaBA expression. PurR is allosterically activated to bind its cognate DNA by binding the purine corepressors, hypoxanthine or guanine, thereby effecting transcription repression. The protein is HTH-type transcriptional repressor PurR of Histophilus somni (strain 129Pt) (Haemophilus somnus).